The chain runs to 526 residues: Sugar transport protein 13 (526 aa).

Residues 1–18 (MTGGGFATSANGVEFEAK) are Cytoplasmic-facing. A helical membrane pass occupies residues 19–39 (ITPIVIISCIMAATGGLMFGY). Over 40–81 (DVGVSGGVTSMPDFLEKFFPVVYRKVVAGADKDSNYCKYDNQ) the chain is Extracellular. The chain crosses the membrane as a helical span at residues 82–102 (GLQLFTSSLYLAGLTATFFAS). Residues 103–111 (YTTRTLGRR) are Cytoplasmic-facing. Residues 112 to 132 (LTMLIAGVFFIIGVALNAGAQ) form a helical membrane-spanning segment. The Extracellular portion of the chain corresponds to 133-141 (DLAMLIAGR). The helical transmembrane segment at 142 to 162 (ILLGCGVGFANQAVPLFLSEI) threads the bilayer. Topologically, residues 163-168 (APTRIR) are cytoplasmic. A helical transmembrane segment spans residues 169 to 189 (GGLNILFQLNVTIGILFANLV). Over 190 to 203 (NYGTAKIKGGWGWR) the chain is Extracellular. The chain crosses the membrane as a helical span at residues 204–224 (LSLGLAGIPALLLTVGALLVT). Over 225–296 (ETPNSLVERG…IAVALQIFQQ (72 aa)) the chain is Cytoplasmic. The chain crosses the membrane as a helical span at residues 297–317 (CTGINAIMFYAPVLFSTLGFG). Residues 318 to 319 (SD) are Extracellular-facing. The helical transmembrane segment at 320-340 (ASLYSAVVTGAVNVLSTLVSI) threads the bilayer. Over 341–349 (YSVDKVGRR) the chain is Cytoplasmic. Residues 350-370 (VLLLEAGVQMFFSQVVIAIIL) traverse the membrane as a helical segment. Over 371–383 (GVKVTDTSTNLSK) the chain is Extracellular. The chain crosses the membrane as a helical span at residues 384–404 (GFAILVVVMICTYVAAFAWSW). Topologically, residues 405-426 (GPLGWLIPSETFPLETRSAGQS) are cytoplasmic. Residues 427–447 (VTVCVNLLFTFIIAQAFLSML) form a helical membrane-spanning segment. At 448-451 (CHFK) the chain is on the extracellular side. A helical membrane pass occupies residues 452–472 (FGIFIFFSAWVLIMSVFVMFL). Topologically, residues 473–526 (LPETKNIPIEEMTERVWKKHWFWARFMDDHNDHEFVNGEKSNGKSNGFDPSTRL) are cytoplasmic.

Belongs to the major facilitator superfamily. Sugar transporter (TC 2.A.1.1) family.

It localises to the cell membrane. In terms of biological role, mediates an active uptake of hexoses, probably by sugar/hydrogen symport. The sequence is that of Sugar transport protein 13 (STP13) from Arabidopsis thaliana (Mouse-ear cress).